We begin with the raw amino-acid sequence, 290 residues long: MDKIIKTISESGAFRAFVLDSTETVRTAQEKHQTQASSTVALGRTLIASQILAANEKGNTKLTVKVLGSSSLGAIITVADTKGNVKGYVQNPGVDIKKTATGEVLVGPFVGNGQFLVITDYGAGNPYNSITPLISGEIGEDLAFYLTESQQTPSAVGLNVLLDEEDKVKVAGGFLVQVLPGAKKEEIARFEKRIQEMPAISTLLESDDHIEALLKAIYGDEAYKRLSEEEIRFQCDCSHERFMNALASLPSSDLQEMKEEDHGAEITCQFCQTTYNFDEKDLEELIRDKS.

2 cysteine pairs are disulfide-bonded: Cys-235-Cys-237 and Cys-268-Cys-271.

The protein belongs to the HSP33 family. In terms of processing, under oxidizing conditions two disulfide bonds are formed involving the reactive cysteines. Under reducing conditions zinc is bound to the reactive cysteines and the protein is inactive.

Its subcellular location is the cytoplasm. In terms of biological role, redox regulated molecular chaperone. Protects both thermally unfolding and oxidatively damaged proteins from irreversible aggregation. Plays an important role in the bacterial defense system toward oxidative stress. In Streptococcus pneumoniae serotype 19F (strain G54), this protein is 33 kDa chaperonin.